We begin with the raw amino-acid sequence, 114 residues long: Probable gas vesicle protein J2 (114 aa).

Over residues 1 to 10 (MTDLDHRYPG) the composition is skewed to basic and acidic residues. The disordered stretch occupies residues 1–21 (MTDLDHRYPGEETEPYGPPSG).

The protein belongs to the gas vesicle GvpA family. Interacts with GvpA.

The protein localises to the gas vesicle. Its function is as follows. A minor component of the gas vesicle, might be involved in nucleating gas vesicle formation. Gas vesicles (GV) are hollow, gas filled proteinaceous nanostructures. It is not clear what function GVs perform in soil bacteria. The polypeptide is Probable gas vesicle protein J2 (Streptomyces coelicolor (strain ATCC BAA-471 / A3(2) / M145)).